The chain runs to 102 residues: A-type ATP synthase subunit F (102 aa).

The protein belongs to the V-ATPase F subunit family. In terms of assembly, has multiple subunits with at least A(3), B(3), C, D, E, F, H, I and proteolipid K(x).

It is found in the cell membrane. Component of the A-type ATP synthase that produces ATP from ADP in the presence of a proton gradient across the membrane. The polypeptide is A-type ATP synthase subunit F (Thermococcus sibiricus (strain DSM 12597 / MM 739)).